The sequence spans 31 residues: Photosystem II reaction center protein M (31 aa).

A helical membrane pass occupies residues 5-25; that stretch reads ILAFIATALLILVPTAFLLII.

The protein belongs to the PsbM family. As to quaternary structure, PSII is composed of 1 copy each of membrane proteins PsbA, PsbB, PsbC, PsbD, PsbE, PsbF, PsbH, PsbI, PsbJ, PsbK, PsbL, PsbM, PsbT, PsbX, PsbY, PsbZ, Psb30/Ycf12, at least 3 peripheral proteins of the oxygen-evolving complex and a large number of cofactors. It forms dimeric complexes.

The protein resides in the plastid membrane. In terms of biological role, one of the components of the core complex of photosystem II (PSII). PSII is a light-driven water:plastoquinone oxidoreductase that uses light energy to abstract electrons from H(2)O, generating O(2) and a proton gradient subsequently used for ATP formation. It consists of a core antenna complex that captures photons, and an electron transfer chain that converts photonic excitation into a charge separation. This subunit is found at the monomer-monomer interface. The polypeptide is Photosystem II reaction center protein M (Cuscuta exaltata (Tall dodder)).